Consider the following 593-residue polypeptide: Translation initiation factor rli1 (593 aa).

2 4Fe-4S ferredoxin-type domains span residues 7 to 39 and 46 to 75; these read RIAI…KLCI and RIAF…IINL. ABC transporter domains lie at 70–318 and 334–556; these read INII…FLDG and FRLA…LKNL. ATP-binding positions include 110–117 and 382–389; these read GTNGIGKS and GENGTGKT.

Belongs to the ABC transporter superfamily. Component of the multifactor complex (MFC). The complex associates with pre-initiation complexes.

It localises to the cytoplasm. The protein localises to the nucleus. Functionally, component of the multifactor complex (MFC) involved in translation initiation. Required for the binding of MFC to the 40S ribosome. Required for the processing and nuclear export of the 60S and 40S ribosomal subunits. The polypeptide is Translation initiation factor rli1 (rli1) (Schizosaccharomyces pombe (strain 972 / ATCC 24843) (Fission yeast)).